The chain runs to 1079 residues: Psi-producing oxygenase A (1079 aa).

The linoleate 8R-lipoxygenase stretch occupies residues 105–446; the sequence is TNTFLTTLWN…DGSYDDNDLV (342 aa). His202 is a binding site for heme b. Tyr374 is an active-site residue. Heme b is bound at residue His377. The 9,12-octadecadienoate 8-hydroperoxide 8R-isomerase stretch occupies residues 654–1079; sequence QFINSHSACM…WDGDLPEVKE (426 aa).

It belongs to the peroxidase family. In terms of assembly, homotetramer. It depends on heme b as a cofactor.

It carries out the reaction (9Z,12Z)-octadecadienoate + O2 = (8R,9Z,12Z)-8-hydroperoxyoctadeca-9,12-dienoate. The enzyme catalyses (8R,9Z,12Z)-8-hydroperoxyoctadeca-9,12-dienoate = (5S,8R,9Z,12Z)-5,8-dihydroxyoctadeca-9,12-dienoate. In terms of biological role, bifunctional heme-containing enzyme that oxidizes linoleic acid to (8R,9Z,12Z)-8-hydroperoxyoctadeca-9,12-dienoate (within the N-terminal heme peroxidase domain), which is subsequently isomerized to (5S,8R,9Z,12Z)-5,8-dihydroxyoctadeca-9,12-dienoate (within the C-terminal P450 heme thiolate domain). Oxidized unsaturated fatty acids, so-called oxylipins, derived from endogenous fatty acids, influence the development of the asexual conidiophores and sexual cleistothecia and regulate the secondary metabolism. These substances were collectively named psi factors and are primarily a mixture of hydroxylated oleic, linoleic and alpha-linolenic acids. They are termed psi-beta, psi-alpha, and psi-gamma, respectively. Oxylipins may also serve as activators of mammalian immune responses contributing to enhanced resistance to opportunistic fungi and as factors that modulate fungal development contributing to resistance to host defenses. This chain is Psi-producing oxygenase A (ppoA), found in Aspergillus fumigatus (strain ATCC MYA-4609 / CBS 101355 / FGSC A1100 / Af293) (Neosartorya fumigata).